The following is a 576-amino-acid chain: TOX high mobility group box family member 3 (576 aa).

3 disordered regions span residues 189 to 258 (NLGG…PQKP), 422 to 443 (TMVG…QHQM), and 519 to 563 (LQHM…QIQS). A compositionally biased stretch (low complexity) spans 204–215 (ASKSATPSPSSS). The segment covering 223 to 239 (EANRAIGEKRAAPDSGK) has biased composition (basic and acidic residues). Residues 240–250 (KPKTPKKKKKK) show a composition bias toward basic residues. Residues 255–323 (PQKPVSAYAL…EYLKALAAYR (69 aa)) constitute a DNA-binding region (HMG box). Residues 428–443 (PSTQVSPSVQTQQHQM) show a composition bias toward low complexity. Residues 528–542 (PSPRQHSPVASQITS) are compositionally biased toward polar residues. Residues 549-563 (SPQPASQQHQSQIQS) are compositionally biased toward low complexity.

As to quaternary structure, homodimer. Interacts with CREB1; the interaction is not depolarization dependent. Interacts with CREBBP (via C-terminus). Interacts (via HGM box) with CITED1 (via C-terminus); the interaction increases estrogen-response element (ERE)-dependent transcription and protection against cell death. Interacts with CREB1 (phosphorylated form). In terms of tissue distribution, expressed mainly in epithelial cells. Expressed in the central nervous system (CNS), in the ileum and within the brain in the frontal and occipital lobe.

Its subcellular location is the nucleus. Transcriptional coactivator of the p300/CBP-mediated transcription complex. Activates transactivation through cAMP response element (CRE) sites. Protects against cell death by inducing antiapoptotic and repressing pro-apoptotic transcripts. Stimulates transcription from the estrogen-responsive or BCL-2 promoters. Required for depolarization-induced transcription activation of the C-FOS promoter in neurons. Associates with chromatin to the estrogen-responsive C3 promoter region. The polypeptide is TOX high mobility group box family member 3 (TOX3) (Homo sapiens (Human)).